The sequence spans 450 residues: UDP-N-acetylmuramate--L-alanine ligase (450 aa).

112–118 (GTHGKTT) contributes to the ATP binding site.

Belongs to the MurCDEF family.

The protein localises to the cytoplasm. It carries out the reaction UDP-N-acetyl-alpha-D-muramate + L-alanine + ATP = UDP-N-acetyl-alpha-D-muramoyl-L-alanine + ADP + phosphate + H(+). The protein operates within cell wall biogenesis; peptidoglycan biosynthesis. Functionally, cell wall formation. The protein is UDP-N-acetylmuramate--L-alanine ligase of Endomicrobium trichonymphae.